Consider the following 112-residue polypeptide: T cell receptor alpha variable 13-1 (112 aa).

The N-terminal stretch at 1–20 is a signal peptide; sequence MTSIRAVFIFLWLQLDLVNG. The 92-residue stretch at 21-112 folds into the Ig-like domain; the sequence is ENVEQHPSTL…DSAVYFCAAS (92 aa). Cysteines 42 and 109 form a disulfide. Residue Asn-86 is glycosylated (N-linked (GlcNAc...) asparagine).

In terms of assembly, alpha-beta TR is a heterodimer composed of an alpha and beta chain; disulfide-linked. The alpha-beta TR is associated with the transmembrane signaling CD3 coreceptor proteins to form the TR-CD3 (TcR or TCR). The assembly of alpha-beta TR heterodimers with CD3 occurs in the endoplasmic reticulum where a single alpha-beta TR heterodimer associates with one CD3D-CD3E heterodimer, one CD3G-CD3E heterodimer and one CD247 homodimer forming a stable octameric structure. CD3D-CD3E and CD3G-CD3E heterodimers preferentially associate with TR alpha and TR beta chains, respectively. The association of the CD247 homodimer is the last step of TcR assembly in the endoplasmic reticulum and is required for transport to the cell surface.

The protein resides in the cell membrane. V region of the variable domain of T cell receptor (TR) alpha chain that participates in the antigen recognition. Alpha-beta T cell receptors are antigen specific receptors which are essential to the immune response and are present on the cell surface of T lymphocytes. Recognize peptide-major histocompatibility (MH) (pMH) complexes that are displayed by antigen presenting cells (APC), a prerequisite for efficient T cell adaptive immunity against pathogens. Binding of alpha-beta TR to pMH complex initiates TR-CD3 clustering on the cell surface and intracellular activation of LCK that phosphorylates the ITAM motifs of CD3G, CD3D, CD3E and CD247 enabling the recruitment of ZAP70. In turn ZAP70 phosphorylates LAT, which recruits numerous signaling molecules to form the LAT signalosome. The LAT signalosome propagates signal branching to three major signaling pathways, the calcium, the mitogen-activated protein kinase (MAPK) kinase and the nuclear factor NF-kappa-B (NF-kB) pathways, leading to the mobilization of transcription factors that are critical for gene expression and essential for T cell growth and differentiation. The T cell repertoire is generated in the thymus, by V-(D)-J rearrangement. This repertoire is then shaped by intrathymic selection events to generate a peripheral T cell pool of self-MH restricted, non-autoaggressive T cells. Post-thymic interaction of alpha-beta TR with the pMH complexes shapes TR structural and functional avidity. The protein is T cell receptor alpha variable 13-1 of Homo sapiens (Human).